A 1992-amino-acid polypeptide reads, in one-letter code: MSNRPNNNPGGSLRRSQRNTAGAQPQDDSIGGRSCSSSSAVIVPQPEDPDRANTSERQKTGQVPKKDNSRGVKRSASPDYNRTNSPSSAKKPKALQHTESPSETNKPHSKSKKRHLDQEQQLKSAQSPSTSKAHTRKSGATGGSRSQKRKRTESSCVKSGSGSESTGAEERSAKPTKLASKSATSAKAGCSTITDSSSAASTSSSSSAVASASSTVPPGARVKQGKDQNKARRSRSASSPSPRRSSREKEQSKTGGSSKFDWAARFSPKVSLPKTKLSLPGSSKSETSKPGPSGLQAKLASLRKSTKKRSESPPAELPSLRRSTRQKTTGSCASTSRRGSGLGKRGAAEARRQEKMADPESNQEAVNSSAARTDEAPQGAAGAVGMTTSGESESDDSEMGRLQALLEARGLPPHLFGPLGPRMSQLFHRTIGSGASSKAQQLLQGLQASDESQQLQAVIEMCQLLVMGNEETLGGFPVKSVVPALITLLQMEHNFDIMNHACRALTYMMEALPRSSAVVVDAIPVFLEKLQVIQCIDVAEQALTALEMLSRRHSKAILQAGGLADCLLYLEFFSINAQRNALAIAANCCQSITPDEFHFVADSLPLLTQRLTHQDKKSVESTCLCFARLVDNFQHEENLLQQVASKDLLTNVQQLLVVTPPILSSGMFIMVVRMFSLMCSNCPTLAVQLMKQNIAETLHFLLCGASNGSCQEQIDLVPRSPQELYELTSLICELMPCLPKEGIFAVDTMLKKGNAQNTDGAIWQWRDDRGLWHPYNRIDSRIIEQINEDTGTARAIQRKPNPLANSNTSGYSESKKDDARAQLMKEDPELAKSFIKTLFGVLYEVYSSSAGPAVRHKCLRAILRIIYFADAELLKDVLKNHAVSSHIASMLSSQDLKIVVGALQMAEILMQKLPDIFSVYFRREGVMHQVKHLAESESLLTSPPKACTNGSGSMGSTTSVSSGTATAATHAAADLGSPSLQHSRDDSLDLSPQGRLSDVLKRKRLPKRGPRRPKYSPPRDDDKVDNQAKSPTTTQSPKSSFLASLNPKTWGRLSTQSNSNNIEPARTAGGSGLARAASKDTISNNREKIKGWIKEQAHKFVERYFSSENMDGSNPALNVLQRLCAATEQLNLQVDGGAECLVEIRSIVSESDVSSFEIQHSGFVKQLLLYLTSKSEKDAVSREIRLKRFLHVFFSSPLPGEEPIGRVEPVGNAPLLALVHKMNNCLSQMEQFPVKVHDFPSGNGTGGSFSLNRGSQALKFFNTHQLKCQLQRHPDCANVKQWKGGPVKIDPLALVQAIERYLVVRGYGRVREDDEDSDDDGSDEEIDESLAAQFLNSGNVRHRLQFYIGEHLLPYNMTVYQAVRQFSIQAEDERESTDDESNPLGRAGIWTKTHTIWYKPVREDEESNKDCVGGKRGRAQTAPTKTSPRNAKKHDELWHDGVCPSVSNPLEVYLIPTPPENITFEDPSLDVILLLRVLHAISRYWYYLYDNAMCKEIIPTSEFINSKLTAKANRQLQDPLVIMTGNIPTWLTELGKTCPFFFPFDTRQMLFYVTAFDRDRAMQRLLDTNPEINQSDSQDSRVAPRLDRKKRTVNREELLKQAESVMQDLGSSRAMLEIQYENEVGTGLGPTLEFYALVSQELQRADLGLWRGEEVTLSNPKGSQEGTKYIQNLQGLFALPFGRTAKPAHIAKVKMKFRFLGKLMAKAIMDFRLVDLPLGLPFYKWMLRQETSLTSHDLFDIDPVVARSVYHLEDIVRQKKRLEQDKSQTKESLQYALETLTMNGCSVEDLGLDFTLPGFPNIELKKGGKDIPVTIHNLEEYLRLVIFWALNEGVSRQFDSFRDGFESVFPLSHLQYFYPEELDQLLCGSKADTWDAKTLMECCRPDHGYTHDSRAVKFLFEILSSFDNEQQRLFLQFVTGSPRLPVGGFRSLNPPLTIVRKTFESTENPDDFLPSVMTCVNYLKLPDYSSIEIMREKLLIAAREGQQSFHLS.

Over residues 1 to 10 (MSNRPNNNPG) the composition is skewed to polar residues. 3 disordered regions span residues 1 to 398 (MSNR…DDSE), 797 to 817 (QRKP…SKKD), and 938 to 1080 (SLLT…ASKD). Serine 2 bears the N-acetylserine mark. Residue serine 12 is modified to Phosphoserine. Residues 18 to 27 (RNTAGAQPQD) show a composition bias toward polar residues. Basic and acidic residues predominate over residues 48–70 (DPDRANTSERQKTGQVPKKDNSR). Serine 77, serine 85, and serine 100 each carry phosphoserine. A compositionally biased stretch (polar residues) spans 78-88 (PDYNRTNSPSS). Residues 119–132 (EQQLKSAQSPSTSK) are compositionally biased toward polar residues. Low complexity-rich tracts occupy residues 154–166 (SSCV…SEST) and 175–216 (PTKL…SSTV). Lysine 181 carries the post-translational modification N6-acetyllysine. The span at 280 to 290 (PGSSKSETSKP) shows a compositional bias: polar residues. Residues serine 310 and serine 312 each carry the phosphoserine modification. Over residues 326–338 (QKTTGSCASTSRR) the composition is skewed to polar residues. Residues 346–358 (GAAEARRQEKMAD) are compositionally biased toward basic and acidic residues. Composition is skewed to polar residues over residues 360–371 (ESNQEAVNSSAA) and 803–812 (LANSNTSGYS). The 88-residue stretch at 749 to 836 (MLKKGNAQNT…DPELAKSFIK (88 aa)) folds into the WWE domain. Serine 942 is subject to Phosphoserine. Residues 948–973 (TNGSGSMGSTTSVSSGTATAATHAAA) are compositionally biased toward low complexity. Residues serine 991 and serine 997 each carry the phosphoserine modification. The segment covering 1001 to 1014 (KRKRLPKRGPRRPK) has biased composition (basic residues). A Phosphoserine modification is found at serine 1016. Residues 1017-1026 (PPRDDDKVDN) show a composition bias toward basic and acidic residues. A compositionally biased stretch (low complexity) spans 1029–1040 (KSPTTTQSPKSS). The residue at position 1030 (serine 1030) is a Phosphoserine. Polar residues predominate over residues 1041-1062 (FLASLNPKTWGRLSTQSNSNNI). Phosphoserine is present on residues serine 1317, serine 1322, serine 1329, and serine 1376. Threonine 1377 carries the phosphothreonine modification. Disordered regions lie at residues 1407–1433 (SNKD…NAKK) and 1568–1587 (TNPE…PRLD). Lysine 1425 bears the N6-acetyllysine mark. Serine 1427 bears the Phosphoserine mark. A K-box region spans residues 1496–1570 (EIIPTSEFIN…AMQRLLDTNP (75 aa)). Positions 1885 to 1992 (PDHGYTHDSR…REGQQSFHLS (108 aa)) constitute an HECT domain. Cysteine 1959 functions as the Glycyl thioester intermediate in the catalytic mechanism.

The protein belongs to the UPL family. K-HECT subfamily. As to quaternary structure, interacts with MYC; leading to disrupt interaction with isoform p19ARF/ARF of CDKN2A. Interacts with TRADD; leading to disrupt interaction with isoform p19ARF/ARF of CDKN2A. Interacts with SMARCC1; leading to disrupt interaction with SMARCE1.

The protein localises to the nucleus. It is found in the nucleoplasm. The enzyme catalyses S-ubiquitinyl-[E2 ubiquitin-conjugating enzyme]-L-cysteine + [acceptor protein]-L-lysine = [E2 ubiquitin-conjugating enzyme]-L-cysteine + N(6)-ubiquitinyl-[acceptor protein]-L-lysine.. The protein operates within protein modification; protein ubiquitination. Its function is as follows. E3 ubiquitin-protein ligase involved in ubiquitin fusion degradation (UFD) pathway and regulation of DNA repair. Part of the ubiquitin fusion degradation (UFD) pathway, a process that mediates ubiquitination of protein at their N-terminus, regardless of the presence of lysine residues in target proteins. Acts as a key regulator of DNA damage response by acting as a suppressor of RNF168, an E3 ubiquitin-protein ligase that promotes accumulation of 'Lys-63'-linked histone H2A and H2AX at DNA damage sites, thereby acting as a guard against excessive spreading of ubiquitinated chromatin at damaged chromosomes. In normal cells, mediates ubiquitination and degradation of isoform p19ARF/ARF of CDKN2A, a lysine-less tumor suppressor required for p53/TP53 activation under oncogenic stress. In cancer cells, however, isoform p19ARF/ARF and TRIP12 are located in different cell compartments, preventing isoform p19ARF/ARF ubiquitination and degradation. Does not mediate ubiquitination of isoform p16-INK4a of CDKN2A. Also catalyzes ubiquitination of NAE1 and SMARCE1, leading to their degradation. Ubiquitination and degradation of target proteins is regulated by interaction with proteins such as MYC, TRADD or SMARCC1, which disrupt the interaction between TRIP12 and target proteins. Mediates ubiquitination of ASXL1: following binding to N(6)-methyladenosine methylated DNA, ASXL1 is ubiquitinated by TRIP12, leading to its degradation and subsequent inactivation of the PR-DUB complex. The chain is E3 ubiquitin-protein ligase TRIP12 (TRIP12) from Homo sapiens (Human).